We begin with the raw amino-acid sequence, 140 residues long: Transmembrane protein 107 (140 aa).

The next 2 membrane-spanning stretches (helical) occupy residues leucine 7–tryptophan 27 and leucine 53–serine 73. A glycan (N-linked (GlcNAc...) asparagine) is linked at asparagine 79. 2 consecutive transmembrane segments (helical) span residues leucine 84 to glycine 104 and isoleucine 113 to phenylalanine 133.

It localises to the membrane. Its function is as follows. May play a role in cilia formation and embryonic patterning. This Xenopus laevis (African clawed frog) protein is Transmembrane protein 107 (tmem107).